We begin with the raw amino-acid sequence, 431 residues long: ETS domain-containing protein Elk-4 (431 aa).

A DNA-binding region (ETS) is located at residues isoleucine 5–valine 85. Residues serine 114 to asparagine 139 form a disordered region. Residues lysine 118–proline 128 show a composition bias toward basic and acidic residues. Lysine 167 is covalently cross-linked (Glycyl lysine isopeptide (Lys-Gly) (interchain with G-Cter in SUMO2)). Phosphoserine is present on serine 180. Disordered stretches follow at residues threonine 251 to isoleucine 282, glutamate 294 to lysine 323, and threonine 411 to threonine 431. Pro residues predominate over residues leucine 261–serine 273. Over residues glutamate 299–valine 313 the composition is skewed to basic and acidic residues.

It belongs to the ETS family. As to quaternary structure, interacts with SIRT7.

The protein localises to the nucleus. Involved in both transcriptional activation and repression. Interaction with SIRT7 leads to recruitment and stabilization of SIRT7 at promoters, followed by deacetylation of histone H3 at 'Lys-18' (H3K18Ac) and subsequent transcription repression. Forms a ternary complex with the serum response factor (SRF). Requires DNA-bound SRF for ternary complex formation and makes extensive DNA contacts to the 5'side of SRF, but does not bind DNA autonomously. In Homo sapiens (Human), this protein is ETS domain-containing protein Elk-4 (ELK4).